We begin with the raw amino-acid sequence, 1201 residues long: ATPase with bromodomain protein abo2 (1201 aa).

Disordered regions lie at residues 1-223 and 305-324; these read MRRR…MRGP and CDSD…TSDV. The segment covering 13-24 has biased composition (acidic residues); sequence DDNEDNEEDDDY. Residues 29–38 are compositionally biased toward basic and acidic residues; it reads HSEKSEDHSN. Over residues 66–89 the composition is skewed to polar residues; sequence FSSLQKHLNTETPSFSVSIENPSK. A compositionally biased stretch (acidic residues) spans 129–146; it reads TDNNEDESTTFKDEEDDL. Over residues 212-221 the composition is skewed to basic residues; sequence RRGRRKRKMR. Positions 312–323 are enriched in low complexity; that stretch reads ELSSTSSEQTSD. ATP is bound at residue 413-420; that stretch reads GPPGTGKT. A Bromo domain is found at 897-1026; that stretch reads KIKNKIQVKL…AHAELNVDEL (130 aa).

This sequence belongs to the AAA ATPase family.

The protein localises to the nucleus. It catalyses the reaction ATP + H2O = ADP + phosphate + H(+). Its function is as follows. Probable ATPase which may play a role in nucleosome organization. The protein is ATPase with bromodomain protein abo2 of Schizosaccharomyces pombe (strain 972 / ATCC 24843) (Fission yeast).